Reading from the N-terminus, the 75-residue chain is Alpha-amylase inhibitor Paim-2 (75 aa).

2 disulfides stabilise this stretch: Cys10–Cys26 and Cys44–Cys72.

Its function is as follows. Inhibits mammalian alpha-amylases specifically but has no action on plant and microbial alpha-amylases. This is Alpha-amylase inhibitor Paim-2 from Streptomyces olivaceoviridis (Streptomyces corchorusii).